A 443-amino-acid polypeptide reads, in one-letter code: Enolase (443 aa).

Gln-167 contacts (2R)-2-phosphoglycerate. Catalysis depends on Glu-209, which acts as the Proton donor. Mg(2+) is bound by residues Asp-246, Glu-291, and Asp-318. (2R)-2-phosphoglycerate contacts are provided by Lys-343, Arg-372, Ser-373, and Lys-394. The active-site Proton acceptor is Lys-343.

Belongs to the enolase family. Component of the RNA degradosome, a multiprotein complex involved in RNA processing and mRNA degradation. Mg(2+) is required as a cofactor.

The protein resides in the cytoplasm. The protein localises to the secreted. Its subcellular location is the cell surface. The catalysed reaction is (2R)-2-phosphoglycerate = phosphoenolpyruvate + H2O. Its pathway is carbohydrate degradation; glycolysis; pyruvate from D-glyceraldehyde 3-phosphate: step 4/5. Catalyzes the reversible conversion of 2-phosphoglycerate (2-PG) into phosphoenolpyruvate (PEP). It is essential for the degradation of carbohydrates via glycolysis. In Wigglesworthia glossinidia brevipalpis, this protein is Enolase.